The chain runs to 398 residues: NADH-quinone oxidoreductase subunit D (398 aa).

The protein belongs to the complex I 49 kDa subunit family. NDH-1 is composed of 14 different subunits. Subunits NuoB, C, D, E, F, and G constitute the peripheral sector of the complex.

The protein resides in the cell inner membrane. It catalyses the reaction a quinone + NADH + 5 H(+)(in) = a quinol + NAD(+) + 4 H(+)(out). Functionally, NDH-1 shuttles electrons from NADH, via FMN and iron-sulfur (Fe-S) centers, to quinones in the respiratory chain. The immediate electron acceptor for the enzyme in this species is believed to be ubiquinone. Couples the redox reaction to proton translocation (for every two electrons transferred, four hydrogen ions are translocated across the cytoplasmic membrane), and thus conserves the redox energy in a proton gradient. The sequence is that of NADH-quinone oxidoreductase subunit D from Bradyrhizobium sp. (strain BTAi1 / ATCC BAA-1182).